We begin with the raw amino-acid sequence, 147 residues long: Large ribosomal subunit protein uL13 (147 aa).

This sequence belongs to the universal ribosomal protein uL13 family. In terms of assembly, part of the 50S ribosomal subunit.

This protein is one of the early assembly proteins of the 50S ribosomal subunit, although it is not seen to bind rRNA by itself. It is important during the early stages of 50S assembly. The protein is Large ribosomal subunit protein uL13 of Lactobacillus acidophilus (strain ATCC 700396 / NCK56 / N2 / NCFM).